We begin with the raw amino-acid sequence, 98 residues long: Feather keratin 3 (98 aa).

It belongs to the avian keratin family. The avian keratins (F-ker, S-ker, C-ker and B-ker) are a complex mixture of very similar polypeptides.

This is Feather keratin 3 from Gallus gallus (Chicken).